A 72-amino-acid polypeptide reads, in one-letter code: Translation initiation factor IF-1 (72 aa).

Residues Met-1–Lys-72 enclose the S1-like domain.

The protein belongs to the IF-1 family. As to quaternary structure, component of the 30S ribosomal translation pre-initiation complex which assembles on the 30S ribosome in the order IF-2 and IF-3, IF-1 and N-formylmethionyl-tRNA(fMet); mRNA recruitment can occur at any time during PIC assembly.

Its subcellular location is the cytoplasm. In terms of biological role, one of the essential components for the initiation of protein synthesis. Stabilizes the binding of IF-2 and IF-3 on the 30S subunit to which N-formylmethionyl-tRNA(fMet) subsequently binds. Helps modulate mRNA selection, yielding the 30S pre-initiation complex (PIC). Upon addition of the 50S ribosomal subunit IF-1, IF-2 and IF-3 are released leaving the mature 70S translation initiation complex. In Gluconobacter oxydans (strain 621H) (Gluconobacter suboxydans), this protein is Translation initiation factor IF-1.